A 524-amino-acid chain; its full sequence is Probable serine/threonine-protein kinase WNK10 (524 aa).

The Protein kinase domain maps to 16 to 273 (IRYNDVLGRG…ALELLKDQLL (258 aa)). Residues 96–99 (TELF) and Lys-146 contribute to the ATP site. Asp-163 functions as the Proton acceptor in the catalytic mechanism. Phosphoserine is present on Ser-477. The stretch at 480 to 523 (SNKQSEDLKTELNVIESQYNQSCQRLLRMKEEAIEKAKRKWMKL) forms a coiled coil.

The protein belongs to the protein kinase superfamily. Ser/Thr protein kinase family. WNK subfamily.

The enzyme catalyses L-seryl-[protein] + ATP = O-phospho-L-seryl-[protein] + ADP + H(+). It carries out the reaction L-threonyl-[protein] + ATP = O-phospho-L-threonyl-[protein] + ADP + H(+). May regulate flowering time by modulating the photoperiod pathway. The protein is Probable serine/threonine-protein kinase WNK10 (WNK10) of Arabidopsis thaliana (Mouse-ear cress).